The chain runs to 176 residues: Disulfide bond formation protein B (176 aa).

The Cytoplasmic portion of the chain corresponds to 1–14 (MLRFLNQCSHGRGA). The helical transmembrane segment at 15-31 (WLLMAFTALALELTALW) threads the bilayer. The Periplasmic segment spans residues 32–49 (FQHVMLLKPCVLCIYERC). C41 and C44 form a disulfide bridge. The chain crosses the membrane as a helical span at residues 50–65 (ALFGVLGAALIGAIAP). Residues 66 to 71 (KTPLRY) are Cytoplasmic-facing. A helical membrane pass occupies residues 72–89 (VAMVIWLYSAFRGVQLTY). At 90–144 (EHTMLQLYPSPFATCDFMARFPEWLPLDKWVPQVFVASGDCAERQWEFLGLEMPQ) the chain is on the periplasmic side. C104 and C130 are disulfide-bonded. Residues 145-163 (WLLGIFIAYLIVAVLVVIS) traverse the membrane as a helical segment. Residues 164–176 (QPFKAKKRDLFGR) are Cytoplasmic-facing.

The protein belongs to the DsbB family.

The protein localises to the cell inner membrane. Required for disulfide bond formation in some periplasmic proteins. Acts by oxidizing the DsbA protein. The protein is Disulfide bond formation protein B of Escherichia coli O6:K15:H31 (strain 536 / UPEC).